A 466-amino-acid polypeptide reads, in one-letter code: Probable Xaa-Pro aminopeptidase pepP (466 aa).

Positions 264, 275, 398, and 438 each coordinate Mn(2+).

This sequence belongs to the peptidase M24B family. Requires Mn(2+) as cofactor.

It catalyses the reaction Release of any N-terminal amino acid, including proline, that is linked to proline, even from a dipeptide or tripeptide.. Its function is as follows. Catalyzes the removal of a penultimate prolyl residue from the N-termini of peptides. The protein is Probable Xaa-Pro aminopeptidase pepP (pepP) of Aspergillus terreus (strain NIH 2624 / FGSC A1156).